The following is a 406-amino-acid chain: Succinylornithine transaminase (406 aa).

Lys252 bears the N6-(pyridoxal phosphate)lysine mark.

Belongs to the class-III pyridoxal-phosphate-dependent aminotransferase family. AstC subfamily. The cofactor is pyridoxal 5'-phosphate.

The enzyme catalyses N(2)-succinyl-L-ornithine + 2-oxoglutarate = N-succinyl-L-glutamate 5-semialdehyde + L-glutamate. The protein operates within amino-acid degradation; L-arginine degradation via AST pathway; L-glutamate and succinate from L-arginine: step 3/5. Functionally, catalyzes the transamination of N(2)-succinylornithine and alpha-ketoglutarate into N(2)-succinylglutamate semialdehyde and glutamate. Can also act as an acetylornithine aminotransferase. The polypeptide is Succinylornithine transaminase (Escherichia coli O139:H28 (strain E24377A / ETEC)).